A 582-amino-acid polypeptide reads, in one-letter code: WD repeat-containing protein JIP5 (582 aa).

WD repeat units follow at residues 27-68, 125-168, 177-216, 265-310, and 373-410; these read KYPE…EAQS, RHKG…VLSK, DKND…SNQL, DQED…LMDQ, and GPAD…LNSD. Disordered regions lie at residues 405-496 and 531-582; these read ETLN…DTEL and TKEQ…FDDL. Composition is skewed to acidic residues over residues 410-438 and 447-485; these read DSDD…DDDV and EVND…ENVT. 2 stretches are compositionally biased toward basic and acidic residues: residues 531–540 and 570–582; these read TKEQSTKKAD and QKHE…FDDL.

The protein belongs to the WD repeat WDR55 family.

The protein localises to the nucleus. It localises to the nucleolus. This is WD repeat-containing protein JIP5 (JIP5) from Debaryomyces hansenii (strain ATCC 36239 / CBS 767 / BCRC 21394 / JCM 1990 / NBRC 0083 / IGC 2968) (Yeast).